We begin with the raw amino-acid sequence, 152 residues long: Gene 35 protein (152 aa).

The stretch at 86–120 (PKKVDILEELTDKVEELEANVSFEVDRIQGYQERY) forms a coiled coil.

The protein belongs to the herpesviridae UL96 family.

This Connochaetes taurinus (Blue wildebeest) protein is Gene 35 protein (35).